The following is a 203-amino-acid chain: Methyltransferase-like 26 (203 aa).

Belongs to the UPF0585 family.

In Xenopus tropicalis (Western clawed frog), this protein is Methyltransferase-like 26.